A 70-amino-acid polypeptide reads, in one-letter code: Cold shock-like protein CspH (70 aa).

Positions 7–67 (GIVKTFDCKS…GLRGPTAANV (61 aa)) constitute a CSD domain.

It is found in the cytoplasm. This chain is Cold shock-like protein CspH (cspH), found in Salmonella typhi.